The primary structure comprises 489 residues: MDFFPVFMRLKDRACLVVGGGPVALRKVSLLRKAHARVTVVSPALCPELAALKARDAIEHLPRGFEDADVDARVLVIAATDDEDLNRHVSELCTERCIPVNVVDQPELCGFITPSMIDRSPIQVAVSTGGSSPVLARLLRSRIESFIPAAYGRLAALVEGYRLKVKARIPDTELRRRFWERLLEGPVTELFMSGREDAARETLEKALETGLDTRDAGGEVFLVGAGPGDPDLLTFRALRLMQLADVVVYDNLVSPAIIELVRRDAEMIYAGKKRNLHTLPQEEINQLLVRLAKEGKRVLRLKGGDPFIFGRGGEEIDTLMQEGIPFQVVPGITAAAGCASFSGIPLTHRDYAQAVVFATGHLRDGSIDLNWKMLAQPRQTVVFYMGLLGLPIICRELMAHGVSPDMPMALVEQGTTQNQRVIVGTLASMPDLVKDYDVQPPTLIIVGEVVKLHERLKWFQPGTDHTVKSLFSSQGQVVEARSSTEGAEA.

Residues 1–203 (MDFFPVFMRL…GREDAARETL (203 aa)) form a precorrin-2 dehydrogenase /sirohydrochlorin ferrochelatase region. Residues 22–23 (PV) and 43–44 (PA) contribute to the NAD(+) site. Residues 218–489 (GEVFLVGAGP…ARSSTEGAEA (272 aa)) form a uroporphyrinogen-III C-methyltransferase region. Pro227 is an S-adenosyl-L-methionine binding site. Asp250 acts as the Proton acceptor in catalysis. Lys272 (proton donor) is an active-site residue. Residues 303-305 (GGD), Ile308, 333-334 (TA), Met385, and Gly414 each bind S-adenosyl-L-methionine.

In the N-terminal section; belongs to the precorrin-2 dehydrogenase / sirohydrochlorin ferrochelatase family. This sequence in the C-terminal section; belongs to the precorrin methyltransferase family.

The catalysed reaction is uroporphyrinogen III + 2 S-adenosyl-L-methionine = precorrin-2 + 2 S-adenosyl-L-homocysteine + H(+). It carries out the reaction precorrin-2 + NAD(+) = sirohydrochlorin + NADH + 2 H(+). It catalyses the reaction siroheme + 2 H(+) = sirohydrochlorin + Fe(2+). It functions in the pathway cofactor biosynthesis; adenosylcobalamin biosynthesis; precorrin-2 from uroporphyrinogen III: step 1/1. The protein operates within cofactor biosynthesis; adenosylcobalamin biosynthesis; sirohydrochlorin from precorrin-2: step 1/1. Its pathway is porphyrin-containing compound metabolism; siroheme biosynthesis; precorrin-2 from uroporphyrinogen III: step 1/1. It participates in porphyrin-containing compound metabolism; siroheme biosynthesis; siroheme from sirohydrochlorin: step 1/1. It functions in the pathway porphyrin-containing compound metabolism; siroheme biosynthesis; sirohydrochlorin from precorrin-2: step 1/1. Its function is as follows. Multifunctional enzyme that catalyzes the SAM-dependent methylations of uroporphyrinogen III at position C-2 and C-7 to form precorrin-2 via precorrin-1. Then it catalyzes the NAD-dependent ring dehydrogenation of precorrin-2 to yield sirohydrochlorin. Finally, it catalyzes the ferrochelation of sirohydrochlorin to yield siroheme. The polypeptide is Siroheme synthase (Thioalkalivibrio sulfidiphilus (strain HL-EbGR7)).